We begin with the raw amino-acid sequence, 872 residues long: Protein SCD5 (872 aa).

Disordered regions lie at residues 1–98 (MSFD…SGGD) and 209–239 (PKPR…TGDQ). Over residues 48 to 85 (FWDQGSRSHSDTTLSYRNNHSNTAADNATNVSSPQKDN) the composition is skewed to polar residues. The short motif at 272–276 (KKVRF) is the KKRVK motif; Required for interaction with GLC7, endocytosis and actin cytoskeleton organization element. 2 disordered regions span residues 280–321 (ITFQ…LDFT) and 338–358 (SGLV…KKVL). 2 stretches are compositionally biased toward polar residues: residues 284–296 (DPPN…SNNS) and 339–348 (GLVSSLPSEQ). 12 tandem repeats follow at residues 405–424 (QLPL…HLVR), 439–458 (QTGL…YLMR), 479–498 (SGGL…YLMK), 534–545 (SPNITLPQSNQQ), 564–575 (SPQHTYSNNVRI), 593–604 (PPQNTLPQHQQS), 608–619 (SPQNTIPQHQRS), 623–634 (SPQNTFTQNQPI), 636–647 (SPQHTYSNNQAT), 650–661 (SPQNTYTNNQQQ), 683–694 (PPQHMYSNVQKQ), and 717–728 (SPQNAANSYFQS). The 3 X 20 AA approximate repeats stretch occupies residues 405-448 (QLPLEPLKPTATGSANHLVREEYNQGLHPSNGAIQTGLQPLKPT). 2 positions are modified to phosphothreonine; by PRK1: T416 and T450. Residues 460–489 (HMEQPQSIKPSSTPETVTNSGGLQPLKPTA) are disordered. The segment covering 462-481 (EQPQSIKPSSTPETVTNSGG) has biased composition (polar residues). T490 bears the Phosphothreonine; by PRK1 mark. Disordered regions lie at residues 516 to 571 (QFTN…TYSN) and 591 to 620 (AFPP…QRSQ). Positions 534 to 728 (SPNITLPQSN…QNAANSYFQS (195 aa)) are 9 X 12 AA approximate repeats. Residue S564 is modified to Phosphoserine. A compositionally biased stretch (polar residues) spans 594–620 (PQNTLPQHQQSHLLSPQNTIPQHQRSQ). The disordered stretch occupies residues 649–681 (ISPQNTYTNNQQQPQHLPPPPPPRAQQQQQGAI). Residues 651 to 663 (PQNTYTNNQQQPQ) are compositionally biased toward low complexity. Residues 697–727 (LVPTQPSYTNSPSIQSPNFLSPQNAANSYFQ) are compositionally biased toward polar residues. Disordered stretches follow at residues 697-758 (LVPT…ISSF) and 806-838 (NSDI…QFPF). Residues 728–745 (SLLSSSPSPNPTPSNAST) show a composition bias toward low complexity. Polar residues-rich tracts occupy residues 746–758 (VNGN…ISSF) and 806–815 (NSDIHSQPNK). Low complexity predominate over residues 823 to 835 (QQVHQQQQQQQQQ).

In terms of assembly, interacts (via KKVRF motif) with phosphatase GLC7. In terms of processing, phosphorylation by PRK1 and/or AKL1 on Thr-416, Thr-450 and Thr-490 of repeats 1-1, 1-2 and/or 1-3 negatively regulates SCD5 function in endocytosis and actin cytoskeleton organization.

The protein localises to the membrane. Regulates both fluid phase and receptor-mediated endocytosis. Involved in vesicular transport at a late stage of the secretory pathway. Regulates actin cytoskeleton organization. This is Protein SCD5 (SCD5) from Saccharomyces cerevisiae (strain ATCC 204508 / S288c) (Baker's yeast).